A 105-amino-acid polypeptide reads, in one-letter code: Large ribosomal subunit protein uL24 (105 aa).

This sequence belongs to the universal ribosomal protein uL24 family. In terms of assembly, part of the 50S ribosomal subunit.

Its function is as follows. One of two assembly initiator proteins, it binds directly to the 5'-end of the 23S rRNA, where it nucleates assembly of the 50S subunit. Functionally, one of the proteins that surrounds the polypeptide exit tunnel on the outside of the subunit. This Dictyoglomus turgidum (strain DSM 6724 / Z-1310) protein is Large ribosomal subunit protein uL24.